The following is a 382-amino-acid chain: UDP-N-acetylglucosamine--N-acetylmuramyl-(pentapeptide) pyrophosphoryl-undecaprenol N-acetylglucosamine transferase (382 aa).

Residues 11-13 (TGG), asparagine 117, arginine 160, serine 209, and glutamine 311 each bind UDP-N-acetyl-alpha-D-glucosamine.

It belongs to the glycosyltransferase 28 family. MurG subfamily.

The protein resides in the cell inner membrane. It catalyses the reaction di-trans,octa-cis-undecaprenyl diphospho-N-acetyl-alpha-D-muramoyl-L-alanyl-D-glutamyl-meso-2,6-diaminopimeloyl-D-alanyl-D-alanine + UDP-N-acetyl-alpha-D-glucosamine = di-trans,octa-cis-undecaprenyl diphospho-[N-acetyl-alpha-D-glucosaminyl-(1-&gt;4)]-N-acetyl-alpha-D-muramoyl-L-alanyl-D-glutamyl-meso-2,6-diaminopimeloyl-D-alanyl-D-alanine + UDP + H(+). It participates in cell wall biogenesis; peptidoglycan biosynthesis. Cell wall formation. Catalyzes the transfer of a GlcNAc subunit on undecaprenyl-pyrophosphoryl-MurNAc-pentapeptide (lipid intermediate I) to form undecaprenyl-pyrophosphoryl-MurNAc-(pentapeptide)GlcNAc (lipid intermediate II). The polypeptide is UDP-N-acetylglucosamine--N-acetylmuramyl-(pentapeptide) pyrophosphoryl-undecaprenol N-acetylglucosamine transferase (Rickettsia akari (strain Hartford)).